Consider the following 88-residue polypeptide: Large ribosomal subunit protein uL23c (88 aa).

This sequence belongs to the universal ribosomal protein uL23 family. As to quaternary structure, part of the 50S ribosomal subunit.

The protein resides in the plastid. It localises to the chloroplast. Its function is as follows. Binds to 23S rRNA. This is Large ribosomal subunit protein uL23c (rpl23) from Spirogyra maxima (Green alga).